We begin with the raw amino-acid sequence, 327 residues long: Malate dehydrogenase (327 aa).

12–18 provides a ligand contact to NAD(+); that stretch reads GAAGQIA. Positions 93 and 99 each coordinate substrate. NAD(+) contacts are provided by residues Asn106, Gln113, and 130–132; that span reads VGN. Asn132 and Arg163 together coordinate substrate. His188 (proton acceptor) is an active-site residue.

The protein belongs to the LDH/MDH superfamily. MDH type 2 family.

It catalyses the reaction (S)-malate + NAD(+) = oxaloacetate + NADH + H(+). Its function is as follows. Catalyzes the reversible oxidation of malate to oxaloacetate. This chain is Malate dehydrogenase, found in Acidiphilium cryptum (strain JF-5).